The chain runs to 808 residues: MTCVLLKAVVESDERADLRQFSRILQLGEKRYLLRNDILDAFADYCRDQERPVPPPSESRLSKLVFYTQEIIVDNESLCWIVRPRIAQQEVCRLLVEDLTIVPMTIPELLDLRDRLVNHYHPNEGDVFEIDVQPFYDYSPIIRDAKNIGKGVEFLNRYLSSKLFQDPRQWQQNLFNFLRIHRYNGYQLLINERIRSPQHLSEQVKQALVVLSDRPPTEAYSEFRFELQNLGFEPGWGNTVARVRDTLEILDQLLDSPDHQVLEAFVSRIPMLFRIALISPHGWFGQEGVLGRPDTGGQVVYILDQVKSLEKQMREDLELAGLGVLEAQPKIIVLTRLIPNAEGTLCNQRLEKIYGTNDAWILRVPFREFNPKVTQNWISRFEIWPYLETFAIDAERELRAEFGHVPDLIIGNYSDGNLVAFLLARRLKVTQCNIAHALEKSKYLFSNLYWQDLEDKYHFSLQFTADLIAMNAANFIISSTYQEIVGTPDSIGQYESYQSFTMPDLYHVVNGIELFSPKFNVVPPGVNEQVYFPYYHYTERLEGDRQRLEELLFTLEDPQQIYGYLEAPEKRPLFSMARLDRIKNLTGLAEAFGRSKALQERCNLILVAGKLRTADSSDREEIAEIEKLYQIIHQYNLHGKIRWLGIRLPKADSGEIYRIIADRQGIFVQPALFEAFGLTILEAMISGLPTFGTRFGGPLEIIQDGVNGFYINPTHLEEMAETIVRFLEACDRDPQEWQRISKAGIERVYSTYTWKIHCTRLLSLAKIYGFWNFSSQENREDMMRYMEALFHLLYKPRAQALLAEHLQR.

Residues 271–753 (MLFRIALISP…GIERVYSTYT (483 aa)) are GT-B glycosyltransferase.

It belongs to the glycosyltransferase 1 family. As to quaternary structure, probably a homotetramer.

The catalysed reaction is an NDP-alpha-D-glucose + D-fructose = a ribonucleoside 5'-diphosphate + sucrose + H(+). The enzyme catalyses ADP-alpha-D-glucose + D-fructose = sucrose + ADP + H(+). In terms of biological role, catalyzes the reversible conversion of sucrose and a nucleotide disphosphate (NDP) into fructose and NDP-glucose; although the reaction is freely reversible in vitro, the physiological reaction seems to be sucrose cleavage. Unlike characterized plant enzymes prefers ADP as a cosubstrate, whereas plants prefer UDP. Its preference for ADP over UDP suggests it may directly link sucrose and glycogen metabolism. This chain is Sucrose synthase, found in Thermosynechococcus vestitus (strain NIES-2133 / IAM M-273 / BP-1).